A 264-amino-acid chain; its full sequence is Methionine aminopeptidase (264 aa).

Position 79 (His-79) interacts with substrate. A divalent metal cation is bound by residues Asp-97, Asp-108, and His-171. His-178 contributes to the substrate binding site. The a divalent metal cation site is built by Glu-204 and Glu-235.

This sequence belongs to the peptidase M24A family. Methionine aminopeptidase type 1 subfamily. Monomer. Co(2+) is required as a cofactor. Requires Zn(2+) as cofactor. It depends on Mn(2+) as a cofactor. Fe(2+) serves as cofactor.

The catalysed reaction is Release of N-terminal amino acids, preferentially methionine, from peptides and arylamides.. Removes the N-terminal methionine from nascent proteins. The N-terminal methionine is often cleaved when the second residue in the primary sequence is small and uncharged (Met-Ala-, Cys, Gly, Pro, Ser, Thr, or Val). Requires deformylation of the N(alpha)-formylated initiator methionine before it can be hydrolyzed. In Salmonella typhi, this protein is Methionine aminopeptidase.